Consider the following 261-residue polypeptide: Carbonic anhydrase 1 (261 aa).

Residues 1 to 31 are disordered; that stretch reads MASPDWGYDDKNGPEQWSKLYPIANGNNQSP. A2 is subject to N-acetylalanine. The region spanning 4-261 is the Alpha-carbonic anhydrase domain; the sequence is PDWGYDDKNG…LKGRTVRASF (258 aa). The active-site Proton donor/acceptor is H65. Residues H65, H68, H95, H97, and H120 each contribute to the Zn(2+) site. Residues T200 and 200–201 contribute to the substrate site; that span reads TH. H201 provides a ligand contact to Zn(2+). Residues 241–261 form a disordered region; sequence PMQHNNRPTQPLKGRTVRASF.

Belongs to the alpha-carbonic anhydrase family. Requires Zn(2+) as cofactor.

The protein resides in the cytoplasm. It carries out the reaction hydrogencarbonate + H(+) = CO2 + H2O. The catalysed reaction is urea = cyanamide + H2O. Its activity is regulated as follows. Activated by histamine, imidazole, L-adrenaline, L- and D-histidine, and L- and D-phenylalanine. Inhibited by coumarins, sulfonamide derivatives such as acetazolamide, benzenesulfonamide and derivatives (4-carboxyethylbenzene-sulfonamide, 4-carboxyethylbenzene-sulfonamide ethyl ester, 4-(acetyl-2-aminoethyl)benzene-sulfonamide, 4-aminoethylbenzene-sulfonamide), and 'prong inhibitors' BR15, BR17, BR22 and BR30. Activated by a short exposition to Foscarnet (phosphonoformate trisodium salt), but inhibited by a long one. Esterase activity weakly reduced by cyanamide. Its function is as follows. Catalyzes the reversible hydration of carbon dioxide. Can hydrate cyanamide to urea. This chain is Carbonic anhydrase 1 (CA1), found in Homo sapiens (Human).